Reading from the N-terminus, the 300-residue chain is uncharacterized protein (300 aa).

The active-site Proton acceptor is His-274.

It belongs to the AB hydrolase superfamily. As to quaternary structure, monomer.

The catalysed reaction is a carboxylic ester + H2O = an alcohol + a carboxylate + H(+). This is an uncharacterized protein from Bacillus subtilis (strain 168).